Reading from the N-terminus, the 285-residue chain is Acrosomal protein SP-10 (285 aa).

Positions 1–21 (MNMFLLLMSLYLLGSARGTSG) are cleaved as a signal peptide. Residues 64–200 (TLSEHGSSEH…GEQPSGAPIS (137 aa)) are disordered. Repeat copies occupy residues 66-70 (SEHGS), 71-75 (SEHGS), 85-89 (PGEHA), 91-95 (SEHAS), 110-114 (VGEQP), 115-119 (SGEQP), 120-124 (SGEHL), 125-129 (SGEQS), 130-134 (LGEHA), 135-139 (SGEQP), 145-149 (SGEHA), 150-154 (SGEQP), 155-159 (SGEHA), 160-164 (SGEQP), 165-169 (SGEQP), 170-174 (SGEHA), 175-179 (SGEQS), 180-184 (LGEHA), and 190-194 (SGEQP). Residues 66–95 (SEHGSSEHGSREHTVAEHTPGEHAESEHAS) form a 3 X 5 AA repeats of S-E-H-[GA]-A region. The segment covering 69–95 (GSSEHGSREHTVAEHTPGEHAESEHAS) has biased composition (basic and acidic residues). The interval 85-184 (PGEHAESEHA…SGEQSLGEHA (100 aa)) is 7 X 5 AA repeats of S-G-E-H-[AL]. Positions 110–194 (VGEQPSGEQP…LSEKPSGEQP (85 aa)) are 9 X 5 AA repeats of [SV]-G-E-Q-[PSA]. Asn278 carries N-linked (GlcNAc...) asparagine glycosylation.

As to expression, testis.

Its subcellular location is the cytoplasmic vesicle. It localises to the secretory vesicle. It is found in the acrosome. The chain is Acrosomal protein SP-10 (ACRV1) from Papio hamadryas (Hamadryas baboon).